Consider the following 292-residue polypeptide: 4-hydroxy-tetrahydrodipicolinate synthase (292 aa).

Thr-45 is a pyruvate binding site. The Proton donor/acceptor role is filled by Tyr-133. Lys-161 functions as the Schiff-base intermediate with substrate in the catalytic mechanism. Pyruvate is bound at residue Ile-203.

This sequence belongs to the DapA family. Homotetramer; dimer of dimers.

The protein resides in the cytoplasm. It carries out the reaction L-aspartate 4-semialdehyde + pyruvate = (2S,4S)-4-hydroxy-2,3,4,5-tetrahydrodipicolinate + H2O + H(+). The protein operates within amino-acid biosynthesis; L-lysine biosynthesis via DAP pathway; (S)-tetrahydrodipicolinate from L-aspartate: step 3/4. Its function is as follows. Catalyzes the condensation of (S)-aspartate-beta-semialdehyde [(S)-ASA] and pyruvate to 4-hydroxy-tetrahydrodipicolinate (HTPA). The polypeptide is 4-hydroxy-tetrahydrodipicolinate synthase (Escherichia fergusonii (strain ATCC 35469 / DSM 13698 / CCUG 18766 / IAM 14443 / JCM 21226 / LMG 7866 / NBRC 102419 / NCTC 12128 / CDC 0568-73)).